The following is a 96-amino-acid chain: 2Fe-2S ferredoxin-5 (96 aa).

Positions proline 2–proline 96 constitute a 2Fe-2S ferredoxin-type domain. The [2Fe-2S] cluster site is built by cysteine 36, cysteine 42, cysteine 45, and cysteine 81.

This sequence belongs to the adrenodoxin/putidaredoxin family. [2Fe-2S] cluster serves as cofactor.

In terms of biological role, may be involved in the assembly of iron-sulfur clusters (Isc-Fd). The sequence is that of 2Fe-2S ferredoxin-5 (fdx5) from Aquifex aeolicus (strain VF5).